The following is a 159-amino-acid chain: Ribonuclease H (159 aa).

An RNase H type-1 domain is found at 2–144 (SQDPVIIHTD…ADELATRGLQ (143 aa)). Mg(2+) is bound by residues aspartate 11, glutamate 50, aspartate 72, and aspartate 136.

The protein belongs to the RNase H family. Monomer. Mg(2+) serves as cofactor.

It is found in the cytoplasm. The catalysed reaction is Endonucleolytic cleavage to 5'-phosphomonoester.. Functionally, endonuclease that specifically degrades the RNA of RNA-DNA hybrids. The polypeptide is Ribonuclease H (Mycolicibacterium smegmatis (strain ATCC 700084 / mc(2)155) (Mycobacterium smegmatis)).